Consider the following 406-residue polypeptide: DNA repair protein RAD55 (406 aa).

Position 43–50 (43–50 (GPPGIGKT)) interacts with ATP. Residues 385–406 (DSNDNPLPNAEGKEEIIYDSEG) are disordered.

This sequence belongs to the RecA family. RAD55 subfamily.

It is found in the nucleus. Functionally, required for radiation resistance and meiotic viability and presumably acts in recombination and recombinational DNA repair pathways. In Saccharomyces cerevisiae (strain ATCC 204508 / S288c) (Baker's yeast), this protein is DNA repair protein RAD55 (RAD55).